A 245-amino-acid chain; its full sequence is Phosphoadenosine 5'-phosphosulfate reductase (245 aa).

The active-site Nucleophile; cysteine thiosulfonate intermediate is cysteine 239.

It belongs to the PAPS reductase family. CysH subfamily.

The protein resides in the cytoplasm. It catalyses the reaction [thioredoxin]-disulfide + sulfite + adenosine 3',5'-bisphosphate + 2 H(+) = [thioredoxin]-dithiol + 3'-phosphoadenylyl sulfate. It participates in sulfur metabolism; hydrogen sulfide biosynthesis; sulfite from sulfate: step 3/3. Catalyzes the formation of sulfite from phosphoadenosine 5'-phosphosulfate (PAPS) using thioredoxin as an electron donor. The sequence is that of Phosphoadenosine 5'-phosphosulfate reductase from Alkalilimnicola ehrlichii (strain ATCC BAA-1101 / DSM 17681 / MLHE-1).